Consider the following 240-residue polypeptide: Phosphatidylserine decarboxylase proenzyme (240 aa).

Ser209 functions as the Schiff-base intermediate with substrate; via pyruvic acid in the catalytic mechanism. A Pyruvic acid (Ser); by autocatalysis modification is found at Ser209.

This sequence belongs to the phosphatidylserine decarboxylase family. PSD-A subfamily. In terms of assembly, heterodimer of a large membrane-associated beta subunit and a small pyruvoyl-containing alpha subunit. Requires pyruvate as cofactor. Is synthesized initially as an inactive proenzyme. Formation of the active enzyme involves a self-maturation process in which the active site pyruvoyl group is generated from an internal serine residue via an autocatalytic post-translational modification. Two non-identical subunits are generated from the proenzyme in this reaction, and the pyruvate is formed at the N-terminus of the alpha chain, which is derived from the carboxyl end of the proenzyme. The post-translation cleavage follows an unusual pathway, termed non-hydrolytic serinolysis, in which the side chain hydroxyl group of the serine supplies its oxygen atom to form the C-terminus of the beta chain, while the remainder of the serine residue undergoes an oxidative deamination to produce ammonia and the pyruvoyl prosthetic group on the alpha chain.

It localises to the cell membrane. It catalyses the reaction a 1,2-diacyl-sn-glycero-3-phospho-L-serine + H(+) = a 1,2-diacyl-sn-glycero-3-phosphoethanolamine + CO2. The protein operates within phospholipid metabolism; phosphatidylethanolamine biosynthesis; phosphatidylethanolamine from CDP-diacylglycerol: step 2/2. Catalyzes the formation of phosphatidylethanolamine (PtdEtn) from phosphatidylserine (PtdSer). This Mycobacterium avium (strain 104) protein is Phosphatidylserine decarboxylase proenzyme.